We begin with the raw amino-acid sequence, 159 residues long: NADH-quinone oxidoreductase subunit B (159 aa).

[4Fe-4S] cluster-binding residues include cysteine 32, cysteine 33, cysteine 97, and cysteine 126.

This sequence belongs to the complex I 20 kDa subunit family. NDH-1 is composed of 14 different subunits. Subunits NuoB, C, D, E, F, and G constitute the peripheral sector of the complex. Requires [4Fe-4S] cluster as cofactor.

It is found in the cell inner membrane. The enzyme catalyses a quinone + NADH + 5 H(+)(in) = a quinol + NAD(+) + 4 H(+)(out). In terms of biological role, NDH-1 shuttles electrons from NADH, via FMN and iron-sulfur (Fe-S) centers, to quinones in the respiratory chain. The immediate electron acceptor for the enzyme in this species is believed to be ubiquinone. Couples the redox reaction to proton translocation (for every two electrons transferred, four hydrogen ions are translocated across the cytoplasmic membrane), and thus conserves the redox energy in a proton gradient. This is NADH-quinone oxidoreductase subunit B from Helicobacter acinonychis (strain Sheeba).